The primary structure comprises 345 residues: Very-long-chain 3-oxoacyl-CoA reductase (345 aa).

Residues 26–46 (GAAVLLTTGTLFIASRVLTFV) form a helical membrane-spanning segment. NADP(+)-binding residues include valine 71, aspartate 125, aspartate 133, asparagine 152, tyrosine 219, lysine 223, isoleucine 252, and serine 254. Tyrosine 219 functions as the Proton donor in the catalytic mechanism. Catalysis depends on lysine 223, which acts as the Lowers pKa of active site Tyr.

This sequence belongs to the short-chain dehydrogenases/reductases (SDR) family.

It is found in the endoplasmic reticulum membrane. The catalysed reaction is a very-long-chain (3R)-3-hydroxyacyl-CoA + NADP(+) = a very-long-chain 3-oxoacyl-CoA + NADPH + H(+). It functions in the pathway lipid metabolism; fatty acid biosynthesis. In terms of biological role, component of the microsomal membrane bound fatty acid elongation system, which produces the 26-carbon very long-chain fatty acids (VLCFA) from palmitate. Catalyzes the reduction of the 3-ketoacyl-CoA intermediate that is formed in each cycle of fatty acid elongation. VLCFAs serve as precursors for ceramide and sphingolipids. The polypeptide is Very-long-chain 3-oxoacyl-CoA reductase (Aspergillus fumigatus (strain CBS 144.89 / FGSC A1163 / CEA10) (Neosartorya fumigata)).